Here is a 189-residue protein sequence, read N- to C-terminus: UPF0301 protein Cgl3084/cg3414 (189 aa).

This sequence belongs to the UPF0301 (AlgH) family.

The protein is UPF0301 protein Cgl3084/cg3414 of Corynebacterium glutamicum (strain ATCC 13032 / DSM 20300 / JCM 1318 / BCRC 11384 / CCUG 27702 / LMG 3730 / NBRC 12168 / NCIMB 10025 / NRRL B-2784 / 534).